Reading from the N-terminus, the 163-residue chain is 3-isopropylmalate dehydratase small subunit (163 aa).

The protein belongs to the LeuD family. LeuD type 2 subfamily. Heterodimer of LeuC and LeuD.

It carries out the reaction (2R,3S)-3-isopropylmalate = (2S)-2-isopropylmalate. Its pathway is amino-acid biosynthesis; L-leucine biosynthesis; L-leucine from 3-methyl-2-oxobutanoate: step 2/4. Catalyzes the isomerization between 2-isopropylmalate and 3-isopropylmalate, via the formation of 2-isopropylmaleate. The chain is 3-isopropylmalate dehydratase small subunit from Thermococcus kodakarensis (strain ATCC BAA-918 / JCM 12380 / KOD1) (Pyrococcus kodakaraensis (strain KOD1)).